Reading from the N-terminus, the 172-residue chain is uncharacterized protein (172 aa).

A run of 4 helical transmembrane segments spans residues 1 to 21 (MLFI…SLSI), 41 to 61 (NSTL…IEAN), 72 to 92 (QIGL…IYEL), and 136 to 156 (FCQA…ILAV).

It is found in the cell membrane. This is an uncharacterized protein from Haemophilus influenzae (strain ATCC 51907 / DSM 11121 / KW20 / Rd).